A 500-amino-acid polypeptide reads, in one-letter code: Nitrate/nitrite transporter NrtP (500 aa).

A run of 12 helical transmembrane segments spans residues 19-39, 52-72, 79-99, 109-129, 147-167, 175-195, 220-240, 247-267, 364-384, 389-409, 425-445, and 451-471; these read WFAF…ATTI, TLGI…GMLL, ITYS…ALAQ, LLMG…AEWF, FGAF…SFFS, LAIA…YNTV, SFWA…LLAW, IHFL…GLFA, WTMT…HFIN, IPVA…GCGA, IAGN…TIFS, and TLFS…AFFL.

Belongs to the major facilitator superfamily. Nitrate/nitrite porter (TC 2.A.1.8) family.

It is found in the cell inner membrane. Functionally, transport system for both nitrate and nitrite, with much higher affinity for nitrate than for nitrite. The chain is Nitrate/nitrite transporter NrtP from Nostoc punctiforme (strain ATCC 29133 / PCC 73102).